The following is a 707-amino-acid chain: Elongation factor G (707 aa).

One can recognise a tr-type G domain in the interval 8–294; sequence ERYRNFGIIA…GVVDYLPSPL (287 aa). GTP-binding positions include 17–24, 92–96, and 146–149; these read AHIDAGKT, DTPGH, and NKMD.

This sequence belongs to the TRAFAC class translation factor GTPase superfamily. Classic translation factor GTPase family. EF-G/EF-2 subfamily.

The protein localises to the cytoplasm. Its function is as follows. Catalyzes the GTP-dependent ribosomal translocation step during translation elongation. During this step, the ribosome changes from the pre-translocational (PRE) to the post-translocational (POST) state as the newly formed A-site-bound peptidyl-tRNA and P-site-bound deacylated tRNA move to the P and E sites, respectively. Catalyzes the coordinated movement of the two tRNA molecules, the mRNA and conformational changes in the ribosome. This chain is Elongation factor G, found in Hyphomonas neptunium (strain ATCC 15444).